Here is a 181-residue protein sequence, read N- to C-terminus: CASP-like protein 1F2 (181 aa).

Residues 1–18 (MADIETKSSQNQPLKTQN) are Cytoplasmic-facing. A helical membrane pass occupies residues 19–39 (IFIGAQIFLRIVVIAASFAST). Residues 40-70 (WLMLTNKQTIDIGGFVLDANYSYSPEFKFLS) are Extracellular-facing. N59 carries N-linked (GlcNAc...) asparagine glycosylation. The chain crosses the membrane as a helical span at residues 71-91 (YANIVVGAFSFVSLLFLVLVG). At 92–100 (RRSSNPTYY) the chain is on the cytoplasmic side. The helical transmembrane segment at 101–121 (FILFLHDLALMSLVLGGCAAA) threads the bilayer. The Extracellular portion of the chain corresponds to 122-150 (TVIGSLGKYGNSHTGWMQICDHFGKFCKR). The chain crosses the membrane as a helical span at residues 151–171 (ATTSVAFSYFSLVCLLILTIT). Residues 172-181 (SASKSRQIQV) are Cytoplasmic-facing.

The protein belongs to the Casparian strip membrane proteins (CASP) family. In terms of assembly, homodimer and heterodimers.

It localises to the cell membrane. This is CASP-like protein 1F2 from Populus trichocarpa (Western balsam poplar).